The sequence spans 802 residues: Penicillin G acylase (802 aa).

Positions Met1–Glu26 are cleaved as a signal peptide. Glu177 serves as a coordination point for Ca(2+). Positions Ser235–Gly265 are cleaved as a propeptide — spacer peptide. Ser266 functions as the Nucleophile in the catalytic mechanism. Ca(2+) is bound at residue Asp341.

This sequence belongs to the peptidase S45 family. As to quaternary structure, heterodimer of an alpha subunit and a beta subunit processed from the same precursor. It depends on Ca(2+) as a cofactor.

The protein localises to the secreted. The enzyme catalyses a penicillin + H2O = 6-aminopenicillanate + a carboxylate. The protein is Penicillin G acylase (pac) of Rhizobium viscosum (Arthrobacter viscosus).